Consider the following 215-residue polypeptide: MAPRPRFDRRAPVRELPNINDRINYPKLRVVDADGTQLGVISRDEALDVARERELDLVLVSEKADPPVCRIMDYGKFKFEQEKKAKEAKKKSHQTEVKEVKMRYKIDAHDYQVRIGQAVRFLKAGDKVKCTVIFRGREIQHTALAEKLLMRMAKDLEESAEVQQPPKREGRNMIMFLGPRKTPLQKDKPEQATKAERTLPIAKPPGKTAAPAAAN.

Positions 159–215 (SAEVQQPPKREGRNMIMFLGPRKTPLQKDKPEQATKAERTLPIAKPPGKTAAPAAAN) are disordered. A compositionally biased stretch (basic and acidic residues) spans 184–197 (LQKDKPEQATKAER). A compositionally biased stretch (low complexity) spans 200 to 215 (PIAKPPGKTAAPAAAN).

It belongs to the IF-3 family. As to quaternary structure, monomer.

Its subcellular location is the cytoplasm. Its function is as follows. IF-3 binds to the 30S ribosomal subunit and shifts the equilibrium between 70S ribosomes and their 50S and 30S subunits in favor of the free subunits, thus enhancing the availability of 30S subunits on which protein synthesis initiation begins. The chain is Translation initiation factor IF-3 from Synechococcus sp. (strain RCC307).